A 74-amino-acid chain; its full sequence is Pelophylaxin-2 (74 aa).

The N-terminal stretch at 1–22 (MFTMKKSLLFFFFLGTIALSLC) is a signal peptide. Positions 23–42 (EEERGADEEENGAEITDEEV) are excised as a propeptide. Cysteine 68 and cysteine 74 form a disulfide bridge.

In terms of tissue distribution, expressed by the skin glands.

It localises to the secreted. Antimicrobial peptide. The sequence is that of Pelophylaxin-2 from Pelophylax fukienensis (Fukien gold-striped pond frog).